A 470-amino-acid chain; its full sequence is FAD-dependent monooxygenase dpchE (470 aa).

A signal peptide spans 1–24; sequence MSEPHFKVIIVGGSITGLTLAHSL. 3 residues coordinate FAD: Glu-35, Gly-49, and Arg-108. The N-linked (GlcNAc...) asparagine glycan is linked to Asn-128. The active site involves Arg-193. 2 residues coordinate FAD: Asp-312 and Ala-325. A helical membrane pass occupies residues 447–463; the sequence is WAVVSRSVLLLVGLAIL.

This sequence belongs to the paxM FAD-dependent monooxygenase family. It depends on FAD as a cofactor.

The protein resides in the membrane. It functions in the pathway secondary metabolite biosynthesis; terpenoid biosynthesis. Its function is as follows. FAD-dependent monooxygenase; part of the gene cluster that mediates the biosynthesis of the diterpenoid pyrones higginsianins A and B. The first step of the pathway is the synthesis of the alpha-pyrone moiety by the polyketide synthase dpchA via condensation of one acetyl-CoA starter unit with 3 malonyl-CoA units and 2 methylations. The alpha-pyrone is then combined with geranylgeranyl pyrophosphate (GGPP) formed by the GGPP synthase dpchD through the action of the prenyltransferase dpchC to yield a linear alpha-pyrone diterpenoid. Subsequent steps in the diterpenoid pyrone biosynthetic pathway involve the decalin core formation, which is initiated by the epoxidation of the C10-C11 olefin by the FAD-dependent oxidoreductase dpchE, and is followed by a cyclization cascade catalyzed by the terpene cyclase dpchB. The short chain dehydrogenase/reductase dpchG then oxidizes the 8S hydroxy group to a ketone and the short chain dehydrogenase/reductase dpchH reduces the ketone to the 8R hydroxy group to yield higginsianin B. Finally, the FAD-dependent oxidoreductase dpchF converts higginsianin B into higginsianin A. The polypeptide is FAD-dependent monooxygenase dpchE (Colletotrichum higginsianum (strain IMI 349063) (Crucifer anthracnose fungus)).